The following is a 420-amino-acid chain: O-methyltransferase penK (420 aa).

Position 285 (aspartate 285) interacts with S-adenosyl-L-methionine. Residue histidine 325 is the Proton acceptor of the active site.

Belongs to the class I-like SAM-binding methyltransferase superfamily. Cation-independent O-methyltransferase family.

It functions in the pathway secondary metabolite biosynthesis. Its pathway is alkaloid biosynthesis. It participates in mycotoxin biosynthesis. Functionally, O-methyltransferase; part of the gene cluster that mediates the biosynthesis of penigequinolones, potent insecticidal alkaloids that contain a highly modified 10-carbon prenyl group. The first stage is catalyzed by the nonribosomal peptide synthetase penN that condenses anthranilic acid and O-methyl-L-tyrosine to produce 4'-methoxycyclopeptin. 4'-methoxycyclopeptin is then converted to 4'-methoxydehydrocyclopeptin by the ketoglutarate-dependent dioxygenase penM through dehydrogenation to form a double bond between C-alpha and C-beta of the O-methyltyrosine side chain. PenM also converts its first product methoxydehydrocyclopeptin to 4'-methoxycyclopenin. The following conversion of 4'methoxycyclopenin into 4'-methoxyviridicatin is catalyzed by the cyclopenase penL. 4'-methoxyviridicatin is the precursor of quinolone natural products, and is further converted to quinolinone B. The prenyltransferase penI then catalyzes the canonical Friedel-Crafts alkylation of quinolinone B with dimethylallyl cation to yield dimethylallyl quinolone, which is subjected to FAD-dependent dehydrogenation by the FAD-linked oxidoreductase penH to yield conjugated aryl diene. The delta(3') double bond then serves as the site of the second alkylation with DMAPP catalyzed by the prenyltransferase penG to yield a carbenium ion intermediate, which can be attacked by H(2)O to yield a styrenyl quinolone containing a C3'-hydroxyprenyl chain, or undergo cyclization to yield yaequinolones J1 and J2. The conversion of the styrenyl quinolone into the tetrahydrofuran-containing yaequinolone C is performed by the FAD-dependent monooxygenase penE and involves epoxidation of the terminal C7'-C8' olefin, followed by epoxide ring opening initiated by the C3' hydroxyl group. The predicted cysteine hydrolase penJ acts as an epoxide hydrolase that enhances the rate of the 5-exo-tet cyclization step, increasing the yield of yaequinolone C. PenF catalyzes the cationic rearrangement of the epoxide formed by penE (before ring opening to produce yaequinolone C) into yaequinolone D. Finally, the short-chain dehydrogenase/reductase (SDR)-like reductase penD, catalyzes both the dehydration of yaequinolone D and the reduction of the resulting oxonium to yield penigequinolone. The chain is O-methyltransferase penK from Penicillium thymicola.